We begin with the raw amino-acid sequence, 443 residues long: Thymidine phosphorylase (443 aa).

This sequence belongs to the thymidine/pyrimidine-nucleoside phosphorylase family. In terms of assembly, homodimer.

The enzyme catalyses thymidine + phosphate = 2-deoxy-alpha-D-ribose 1-phosphate + thymine. It functions in the pathway pyrimidine metabolism; dTMP biosynthesis via salvage pathway; dTMP from thymine: step 1/2. Functionally, the enzymes which catalyze the reversible phosphorolysis of pyrimidine nucleosides are involved in the degradation of these compounds and in their utilization as carbon and energy sources, or in the rescue of pyrimidine bases for nucleotide synthesis. The chain is Thymidine phosphorylase from Shewanella baltica (strain OS223).